We begin with the raw amino-acid sequence, 158 residues long: Non-specific lipid transfer protein GPI-anchored 29 (158 aa).

Residues methionine 1–glycine 24 form the signal peptide. Cystine bridges form between cysteine 28–cysteine 71, cysteine 38–cysteine 55, cysteine 56–cysteine 95, and cysteine 69–cysteine 105. N-linked (GlcNAc...) asparagine glycosylation occurs at asparagine 84. Serine 134 is lipidated: GPI-anchor amidated serine. A propeptide spans lysine 135–isoleucine 158 (removed in mature form).

This sequence belongs to the plant LTP family. As to expression, confined to the ovaries of the inflorescence.

The protein localises to the secreted. It is found in the cell membrane. Probable lipid transfer protein. In Arabidopsis thaliana (Mouse-ear cress), this protein is Non-specific lipid transfer protein GPI-anchored 29.